Consider the following 404-residue polypeptide: Zinc finger protein zfs1 (404 aa).

The span at 134-149 (SYLHSGSSPHGNTSNH) shows a compositional bias: polar residues. Disordered regions lie at residues 134–168 (SYLH…TGSG) and 259–322 (SNAS…APNG). Low complexity predominate over residues 150–168 (PSPISSLESLPSRSSTGSG). Residues 259–283 (SNASIRNAPSNLSKQFSPSGNSPLT) show a composition bias toward polar residues. Residues 304–317 (GSASHPHGSGSSNG) are compositionally biased toward low complexity. 2 consecutive C3H1-type zinc fingers follow at residues 326–354 (LYKT…HGNQ) and 364–392 (KYKS…HDES).

Interacts with moc3.

The protein localises to the cytoplasm. Its subcellular location is the nucleus. Its function is as follows. Binds to specific AU-rich elements (ARE) in the 3'-untranslated region of target mRNAs and promotes their degradation. Binds to ARE present in the arz1 mRNA and stimulates the rate of arz1 mRNA decay. Required for coordination of septum formation with exit from mitosis. Involved in the mating response pathway. Induces sexual development and ascus formation. This chain is Zinc finger protein zfs1 (zfs1), found in Schizosaccharomyces pombe (strain 972 / ATCC 24843) (Fission yeast).